The following is a 782-amino-acid chain: Translation initiation factor IF-2 (782 aa).

The segment at D47–E196 is disordered. Residues T53 to T65 show a composition bias toward basic and acidic residues. Residues S66 to T81 are compositionally biased toward polar residues. Residues N82–P93 are compositionally biased toward low complexity. Residues K115 to K129 are compositionally biased toward polar residues. The segment covering G133–G170 has biased composition (low complexity). A tr-type G domain is found at E283–K452. Residues G292–T299 are G1. Residue G292–T299 coordinates GTP. The interval G317–H321 is G2. Residues D338–G341 are G3. GTP contacts are provided by residues D338–H342 and N392–D395. Residues N392–D395 are G4. Residues S428–K430 are G5.

The protein belongs to the TRAFAC class translation factor GTPase superfamily. Classic translation factor GTPase family. IF-2 subfamily.

It localises to the cytoplasm. One of the essential components for the initiation of protein synthesis. Protects formylmethionyl-tRNA from spontaneous hydrolysis and promotes its binding to the 30S ribosomal subunits. Also involved in the hydrolysis of GTP during the formation of the 70S ribosomal complex. In Listeria innocua serovar 6a (strain ATCC BAA-680 / CLIP 11262), this protein is Translation initiation factor IF-2.